The primary structure comprises 197 residues: Probable chemoreceptor glutamine deamidase CheD 2 (197 aa).

It belongs to the CheD family.

It carries out the reaction L-glutaminyl-[protein] + H2O = L-glutamyl-[protein] + NH4(+). In terms of biological role, probably deamidates glutamine residues to glutamate on methyl-accepting chemotaxis receptors (MCPs), playing an important role in chemotaxis. The polypeptide is Probable chemoreceptor glutamine deamidase CheD 2 (Dechloromonas aromatica (strain RCB)).